The chain runs to 126 residues: Aspartate 1-decarboxylase (126 aa).

Residue serine 25 is the Schiff-base intermediate with substrate; via pyruvic acid of the active site. At serine 25 the chain carries Pyruvic acid (Ser). Threonine 57 contacts substrate. Tyrosine 58 acts as the Proton donor in catalysis. 73–75 (GAA) provides a ligand contact to substrate.

The protein belongs to the PanD family. In terms of assembly, heterooctamer of four alpha and four beta subunits. It depends on pyruvate as a cofactor. In terms of processing, is synthesized initially as an inactive proenzyme, which is activated by self-cleavage at a specific serine bond to produce a beta-subunit with a hydroxyl group at its C-terminus and an alpha-subunit with a pyruvoyl group at its N-terminus.

Its subcellular location is the cytoplasm. The catalysed reaction is L-aspartate + H(+) = beta-alanine + CO2. The protein operates within cofactor biosynthesis; (R)-pantothenate biosynthesis; beta-alanine from L-aspartate: step 1/1. Functionally, catalyzes the pyruvoyl-dependent decarboxylation of aspartate to produce beta-alanine. In Alcanivorax borkumensis (strain ATCC 700651 / DSM 11573 / NCIMB 13689 / SK2), this protein is Aspartate 1-decarboxylase.